Here is a 334-residue protein sequence, read N- to C-terminus: Glycerol-3-phosphate dehydrogenase [NAD(P)+] (334 aa).

Positions 13, 33, and 106 each coordinate NADPH. Residues Lys106, Gly137, and Ser139 each contribute to the sn-glycerol 3-phosphate site. Ala141 serves as a coordination point for NADPH. Sn-glycerol 3-phosphate contacts are provided by Lys192, Asp245, Ser255, Arg256, and Asn257. Lys192 serves as the catalytic Proton acceptor. Arg256 is a binding site for NADPH. Positions 280 and 282 each coordinate NADPH.

It belongs to the NAD-dependent glycerol-3-phosphate dehydrogenase family.

It localises to the cytoplasm. The catalysed reaction is sn-glycerol 3-phosphate + NAD(+) = dihydroxyacetone phosphate + NADH + H(+). It catalyses the reaction sn-glycerol 3-phosphate + NADP(+) = dihydroxyacetone phosphate + NADPH + H(+). It participates in membrane lipid metabolism; glycerophospholipid metabolism. Catalyzes the reduction of the glycolytic intermediate dihydroxyacetone phosphate (DHAP) to sn-glycerol 3-phosphate (G3P), the key precursor for phospholipid synthesis. In Chlamydia muridarum (strain MoPn / Nigg), this protein is Glycerol-3-phosphate dehydrogenase [NAD(P)+].